A 177-amino-acid chain; its full sequence is Large ribosomal subunit protein uL5 (177 aa).

It belongs to the universal ribosomal protein uL5 family. In terms of assembly, part of the 50S ribosomal subunit; part of the 5S rRNA/L5/L18/L25 subcomplex. Contacts the 5S rRNA and the P site tRNA. Forms a bridge to the 30S subunit in the 70S ribosome.

This is one of the proteins that bind and probably mediate the attachment of the 5S RNA into the large ribosomal subunit, where it forms part of the central protuberance. In the 70S ribosome it contacts protein S13 of the 30S subunit (bridge B1b), connecting the 2 subunits; this bridge is implicated in subunit movement. Contacts the P site tRNA; the 5S rRNA and some of its associated proteins might help stabilize positioning of ribosome-bound tRNAs. The chain is Large ribosomal subunit protein uL5 from Neorickettsia sennetsu (strain ATCC VR-367 / Miyayama) (Ehrlichia sennetsu).